We begin with the raw amino-acid sequence, 535 residues long: CTP synthase (535 aa).

Residues 1–267 are amidoligase domain; the sequence is MTKYIFVTGG…DQIVCDHLKL (267 aa). Position 13 (S13) interacts with CTP. S13 provides a ligand contact to UTP. 14–19 provides a ligand contact to ATP; it reads SLGKGI. An L-glutamine-binding site is contributed by Y54. D71 contributes to the ATP binding site. Positions 71 and 141 each coordinate Mg(2+). CTP is bound by residues 148–150, 188–193, and K224; these read DIE and KTKPTQ. UTP is bound by residues 188-193 and K224; that span reads KTKPTQ. An ATP-binding site is contributed by 240-242; that stretch reads RDA. Residues 292-534 form the Glutamine amidotransferase type-1 domain; that stretch reads KIALVGKYVE…VRASITNKES (243 aa). G354 provides a ligand contact to L-glutamine. The active-site Nucleophile; for glutamine hydrolysis is the C381. Residues 382–385, E405, and R462 contribute to the L-glutamine site; that span reads LGMQ. Active-site residues include H507 and E509.

It belongs to the CTP synthase family. In terms of assembly, homotetramer.

It carries out the reaction UTP + L-glutamine + ATP + H2O = CTP + L-glutamate + ADP + phosphate + 2 H(+). The catalysed reaction is L-glutamine + H2O = L-glutamate + NH4(+). The enzyme catalyses UTP + NH4(+) + ATP = CTP + ADP + phosphate + 2 H(+). Its pathway is pyrimidine metabolism; CTP biosynthesis via de novo pathway; CTP from UDP: step 2/2. Allosterically activated by GTP, when glutamine is the substrate; GTP has no effect on the reaction when ammonia is the substrate. The allosteric effector GTP functions by stabilizing the protein conformation that binds the tetrahedral intermediate(s) formed during glutamine hydrolysis. Inhibited by the product CTP, via allosteric rather than competitive inhibition. Catalyzes the ATP-dependent amination of UTP to CTP with either L-glutamine or ammonia as the source of nitrogen. Regulates intracellular CTP levels through interactions with the four ribonucleotide triphosphates. The polypeptide is CTP synthase (Bacillus cereus (strain G9842)).